We begin with the raw amino-acid sequence, 426 residues long: Enolase (426 aa).

A (2R)-2-phosphoglycerate-binding site is contributed by glutamine 163. Residue glutamate 205 is the Proton donor of the active site. Mg(2+) is bound by residues aspartate 242, glutamate 286, and aspartate 313. The (2R)-2-phosphoglycerate site is built by lysine 338, arginine 367, serine 368, and lysine 389. Lysine 338 acts as the Proton acceptor in catalysis.

The protein belongs to the enolase family. Mg(2+) serves as cofactor.

The protein resides in the cytoplasm. It localises to the secreted. It is found in the cell surface. It catalyses the reaction (2R)-2-phosphoglycerate = phosphoenolpyruvate + H2O. It participates in carbohydrate degradation; glycolysis; pyruvate from D-glyceraldehyde 3-phosphate: step 4/5. Its function is as follows. Catalyzes the reversible conversion of 2-phosphoglycerate (2-PG) into phosphoenolpyruvate (PEP). It is essential for the degradation of carbohydrates via glycolysis. The protein is Enolase of Helicobacter pylori (strain J99 / ATCC 700824) (Campylobacter pylori J99).